The chain runs to 397 residues: Elongation factor Tu (397 aa).

The region spanning Lys10–Val207 is the tr-type G domain. The interval Gly19–Thr26 is G1. Residue Gly19–Thr26 participates in GTP binding. Residue Thr26 coordinates Mg(2+). A G2 region spans residues Gly63 to Asn67. A G3 region spans residues Asp84–Gly87. Residues Asp84 to His88 and Asn139 to Asp142 contribute to the GTP site. Positions Asn139–Asp142 are G4. Residues Ser177–Leu179 form a G5 region.

It belongs to the TRAFAC class translation factor GTPase superfamily. Classic translation factor GTPase family. EF-Tu/EF-1A subfamily. In terms of assembly, monomer.

It localises to the cytoplasm. It carries out the reaction GTP + H2O = GDP + phosphate + H(+). Functionally, GTP hydrolase that promotes the GTP-dependent binding of aminoacyl-tRNA to the A-site of ribosomes during protein biosynthesis. The chain is Elongation factor Tu from Clavibacter sepedonicus (Clavibacter michiganensis subsp. sepedonicus).